A 662-amino-acid chain; its full sequence is p-hydroxybenzoic acid efflux pump subunit AaeB (662 aa).

11 helical membrane passes run 22 to 42, 52 to 72, 78 to 98, 102 to 122, 129 to 149, 161 to 181, 378 to 398, 415 to 435, 439 to 459, 467 to 487, and 491 to 511; these read FAFK…HLQL, AAIV…SGAI, LRIV…ISTI, IVMM…SSLV, IFGL…GTPM, EIVL…PRSI, LFWL…IAVV, FLYG…FILP, QSIL…GVEV, LGAL…TFNI, and LDNA…ILLI.

This sequence belongs to the aromatic acid exporter ArAE (TC 2.A.85) family.

The protein resides in the cell inner membrane. Forms an efflux pump with AaeA. Could function as a metabolic relief valve, allowing to eliminate certain compounds when they accumulate to high levels in the cell. In Pectobacterium parmentieri (strain WPP163) (Pectobacterium wasabiae (strain WPP163)), this protein is p-hydroxybenzoic acid efflux pump subunit AaeB.